A 181-amino-acid chain; its full sequence is MAEKRELATFAGGCFWCMVKPFDEQPGILKVESGYTGGHTENPTYEEVCSNTTGHREAVQITFDPDVFPYEKLLELYWQQIDPTDSGGQFTDRGESYRTAIFYHNDKQRKLAEESKKKLGESGIFKDPIATDILEAGPFYPAEEYHQDYHKKHPERYTQYRIGSGREGFLQQHWGRKHDEQ.

C14 is a catalytic residue.

It belongs to the MsrA Met sulfoxide reductase family.

It carries out the reaction L-methionyl-[protein] + [thioredoxin]-disulfide + H2O = L-methionyl-(S)-S-oxide-[protein] + [thioredoxin]-dithiol. The enzyme catalyses [thioredoxin]-disulfide + L-methionine + H2O = L-methionine (S)-S-oxide + [thioredoxin]-dithiol. Its function is as follows. Has an important function as a repair enzyme for proteins that have been inactivated by oxidation. Catalyzes the reversible oxidation-reduction of methionine sulfoxide in proteins to methionine. The chain is Peptide methionine sulfoxide reductase MsrA from Bacillus licheniformis (strain ATCC 14580 / DSM 13 / JCM 2505 / CCUG 7422 / NBRC 12200 / NCIMB 9375 / NCTC 10341 / NRRL NRS-1264 / Gibson 46).